A 152-amino-acid chain; its full sequence is Protein-export protein SecB (152 aa).

Belongs to the SecB family. Homotetramer, a dimer of dimers. One homotetramer interacts with 1 SecA dimer.

Its subcellular location is the cytoplasm. One of the proteins required for the normal export of preproteins out of the cell cytoplasm. It is a molecular chaperone that binds to a subset of precursor proteins, maintaining them in a translocation-competent state. It also specifically binds to its receptor SecA. The sequence is that of Protein-export protein SecB from Rickettsia conorii (strain ATCC VR-613 / Malish 7).